Reading from the N-terminus, the 155-residue chain is SsrA-binding protein (155 aa).

Belongs to the SmpB family.

Its subcellular location is the cytoplasm. Required for rescue of stalled ribosomes mediated by trans-translation. Binds to transfer-messenger RNA (tmRNA), required for stable association of tmRNA with ribosomes. tmRNA and SmpB together mimic tRNA shape, replacing the anticodon stem-loop with SmpB. tmRNA is encoded by the ssrA gene; the 2 termini fold to resemble tRNA(Ala) and it encodes a 'tag peptide', a short internal open reading frame. During trans-translation Ala-aminoacylated tmRNA acts like a tRNA, entering the A-site of stalled ribosomes, displacing the stalled mRNA. The ribosome then switches to translate the ORF on the tmRNA; the nascent peptide is terminated with the 'tag peptide' encoded by the tmRNA and targeted for degradation. The ribosome is freed to recommence translation, which seems to be the essential function of trans-translation. The chain is SsrA-binding protein from Alkaliphilus oremlandii (strain OhILAs) (Clostridium oremlandii (strain OhILAs)).